The following is a 246-amino-acid chain: 1-(5-phosphoribosyl)-5-[(5-phosphoribosylamino)methylideneamino] imidazole-4-carboxamide isomerase (246 aa).

D8 (proton acceptor) is an active-site residue. The active-site Proton donor is the D131.

Belongs to the HisA/HisF family.

It is found in the cytoplasm. It catalyses the reaction 1-(5-phospho-beta-D-ribosyl)-5-[(5-phospho-beta-D-ribosylamino)methylideneamino]imidazole-4-carboxamide = 5-[(5-phospho-1-deoxy-D-ribulos-1-ylimino)methylamino]-1-(5-phospho-beta-D-ribosyl)imidazole-4-carboxamide. It functions in the pathway amino-acid biosynthesis; L-histidine biosynthesis; L-histidine from 5-phospho-alpha-D-ribose 1-diphosphate: step 4/9. This chain is 1-(5-phosphoribosyl)-5-[(5-phosphoribosylamino)methylideneamino] imidazole-4-carboxamide isomerase, found in Chromobacterium violaceum (strain ATCC 12472 / DSM 30191 / JCM 1249 / CCUG 213 / NBRC 12614 / NCIMB 9131 / NCTC 9757 / MK).